The chain runs to 314 residues: Peroxidase 2 (314 aa).

An N-terminal signal peptide occupies residues 1–23; it reads MASASSVSLMLLVAAAMASAASA. At glutamine 24 the chain carries Pyrrolidone carboxylic acid. Intrachain disulfides connect cysteine 34–cysteine 109, cysteine 67–cysteine 72, cysteine 115–cysteine 310, and cysteine 194–cysteine 219. Histidine 65 serves as the catalytic Proton acceptor. Ca(2+) is bound by residues aspartate 66, valine 69, glycine 71, aspartate 73, and serine 75. N-linked (GlcNAc...) asparagine glycosylation occurs at asparagine 148. Residue proline 157 participates in substrate binding. N-linked (GlcNAc...) asparagine glycosylation occurs at asparagine 169. Position 187 (histidine 187) interacts with heme b. Threonine 188 lines the Ca(2+) pocket. N-linked (GlcNAc...) asparagine glycosylation is present at asparagine 203. Ca(2+)-binding residues include aspartate 234, threonine 237, and aspartate 242. Residues asparagine 274 and asparagine 309 are each glycosylated (N-linked (GlcNAc...) asparagine).

Belongs to the peroxidase family. Classical plant (class III) peroxidase subfamily. Ca(2+) is required as a cofactor. Requires heme b as cofactor.

It localises to the secreted. It carries out the reaction 2 a phenolic donor + H2O2 = 2 a phenolic radical donor + 2 H2O. Functionally, removal of H(2)O(2), oxidation of toxic reductants, biosynthesis and degradation of lignin, suberization, auxin catabolism, response to environmental stresses such as wounding, pathogen attack and oxidative stress. These functions might be dependent on each isozyme/isoform in each plant tissue. In Oryza sativa subsp. indica (Rice), this protein is Peroxidase 2 (PRX112).